The chain runs to 969 residues: Leucine--tRNA ligase (969 aa).

Residues 1–23 are disordered; it reads MTESPTTSPATGSGAAAPDSDAP. A 'HIGH' region motif is present at residues 78-89; the sequence is PYPSGEGLHVGH. The 'KMSKS' region signature appears at 737-741; sequence KIGKS. Lysine 740 is an ATP binding site.

This sequence belongs to the class-I aminoacyl-tRNA synthetase family.

It localises to the cytoplasm. The catalysed reaction is tRNA(Leu) + L-leucine + ATP = L-leucyl-tRNA(Leu) + AMP + diphosphate. This Mycobacterium avium (strain 104) protein is Leucine--tRNA ligase.